Reading from the N-terminus, the 684-residue chain is Probable Xaa-Pro aminopeptidase P (684 aa).

4 residues coordinate Mn(2+): Asp-481, Asp-492, Glu-590, and Glu-604.

It belongs to the peptidase M24B family. Mn(2+) serves as cofactor.

It catalyses the reaction Release of any N-terminal amino acid, including proline, that is linked to proline, even from a dipeptide or tripeptide.. In terms of biological role, catalyzes the removal of a penultimate prolyl residue from the N-termini of peptides. In Neurospora crassa (strain ATCC 24698 / 74-OR23-1A / CBS 708.71 / DSM 1257 / FGSC 987), this protein is Probable Xaa-Pro aminopeptidase P (ampp).